Reading from the N-terminus, the 1168-residue chain is Probable serine/threonine protein kinase IRE (1168 aa).

Disordered stretches follow at residues 1–165 (MSTT…GVES) and 377–444 (EKQN…KIQP). A compositionally biased stretch (low complexity) spans 16–25 (PTTISTPTST). 2 stretches are compositionally biased toward basic and acidic residues: residues 39–54 (RHSD…KTDE) and 107–130 (QDDK…DARA). Composition is skewed to polar residues over residues 146 to 163 (QWSQ…NPGV) and 401 to 414 (TARS…NFRM). The C2H2-type; atypical zinc-finger motif lies at 488–507 (CRICEVEIPVVHVEEHSRIC). Disordered regions lie at residues 546-566 (PRAV…DLDE), 602-622 (GTKD…PRNS), and 717-744 (SSNA…LNPR). A Protein kinase domain is found at 754-1043 (FEIIKPISRG…AGEVKQHHFF (290 aa)). ATP contacts are provided by residues 760-768 (ISRGAFGRV) and K783. D877 (proton acceptor) is an active-site residue. Residues 1044–1144 (KDINWDTLAR…KNLSQLASIN (101 aa)) enclose the AGC-kinase C-terminal domain.

The protein belongs to the protein kinase superfamily. AGC Ser/Thr protein kinase family. As to expression, highly expressed in roots, elongating root hair cells and pollen grains.

The enzyme catalyses L-seryl-[protein] + ATP = O-phospho-L-seryl-[protein] + ADP + H(+). It carries out the reaction L-threonyl-[protein] + ATP = O-phospho-L-threonyl-[protein] + ADP + H(+). Its function is as follows. Modulates root tip growth. May play a common role in the tip growth of plant cells. The polypeptide is Probable serine/threonine protein kinase IRE (Arabidopsis thaliana (Mouse-ear cress)).